Reading from the N-terminus, the 248-residue chain is Spherulin-1B (248 aa).

The signal sequence occupies residues Met1–Ala20. The Cupin type-1 domain occupies Phe61–Val207. Mn(2+) contacts are provided by His110, His112, Glu117, and His157. An N-linked (GlcNAc...) asparagine glycan is attached at Asn200.

It belongs to the germin family.

Its subcellular location is the secreted. The protein resides in the cell wall. The chain is Spherulin-1B from Physarum polycephalum (Slime mold).